The chain runs to 56 residues: Prokaryotic ubiquitin-like protein UBact (56 aa).

A compositionally biased stretch (basic and acidic residues) spans 1–28 (MPQDQQRKKQFDPNPNRDDSQRKTPVDK). Residues 1–33 (MPQDQQRKKQFDPNPNRDDSQRKTPVDKEIDDI) are disordered. Glutamine 56 carries the deamidated glutamine modification. Residue glutamine 56 forms an Isoglutamyl lysine isopeptide (Gln-Lys) (interchain with K-? in acceptor proteins) linkage.

This sequence belongs to the ubiquitin-like protein UBact family. In terms of processing, may be modified by deamidation of its C-terminal glutamine to glutamate by the adjacently encoded deamidase. This could be a prerequisite to the subsequent conjugation, as shown in the other prokaryotic ubiquitin-like protein Pup.

Its function is as follows. May function as a protein modifier covalently attached to lysine residues of substrate proteins. This may serve to target the modified proteins for degradation by proteasomes. In Yanofskybacteria sp. (strain GW2011_GWA1_39_13), this protein is Prokaryotic ubiquitin-like protein UBact.